The following is a 303-amino-acid chain: Mitochondrial carrier homolog 2 (303 aa).

Alanine 2 carries the post-translational modification N-acetylalanine. Residues 2–15 (ADAASQVLLGSGLT) lie on the Mitochondrial intermembrane side of the membrane. Solcar repeat units follow at residues 2–98 (ADAA…YQES) and 118–206 (DRVI…INTY). A helical membrane pass occupies residues 16 to 36 (ILSQPLMYVKVLIQVGYEPLP). Over 37-77 (PTIGRNIFGRQVCQLPGLFCYAQHIASIDGRRGLFTGLTPR) the chain is Cytoplasmic. Residues 78 to 92 (LCSGVLGTVVHGKVL) form a helical membrane-spanning segment. Residues 93 to 135 (QYYQESEKPEELGSVTVQKEYSSSFDRVIKETTREMIARSAAT) are Mitochondrial intermembrane-facing. A helical membrane pass occupies residues 136-156 (LITHPFHVITLRSMVQFIGRE). Topologically, residues 157-180 (SKYCGLCDSIVTIYREEGIVGFFA) are cytoplasmic. The chain crosses the membrane as a helical span at residues 181-199 (GLIPRLLGDIISLWLCNSL). The Mitochondrial intermembrane segment spans residues 200-231 (AYLINTYALDSGVSTMNEMKSYSQAVTGFFAS). The chain crosses the membrane as a helical span at residues 232-252 (MLTYPFVLVSNLMAVNNCGLA). The Cytoplasmic portion of the chain corresponds to 253–280 (GGSPPYSPIYTSWIDCWCMLQKAGNMSR). A helical transmembrane segment spans residues 281–303 (GNSLFFRKVPCGKTYCYDLRMLI).

This sequence belongs to the mitochondrial carrier (TC 2.A.29) family. As to quaternary structure, interacts with p15BID. Expressed in a wide variety of tissues. Predominant expressed in liver, kidney, heart, skeletal muscle and testis.

Its subcellular location is the mitochondrion outer membrane. Functionally, protein insertase that mediates insertion of transmembrane proteins into the mitochondrial outer membrane. Catalyzes insertion of proteins with alpha-helical transmembrane regions, such as signal-anchored, tail-anchored and multi-pass membrane proteins. Does not mediate insertion of beta-barrel transmembrane proteins. Also acts as a receptor for the truncated form of pro-apoptotic BH3-interacting domain death agonist (p15 BID) and has therefore a critical function in apoptosis. Regulates the quiescence/cycling of hematopoietic stem cells (HSCs). Acts as a regulator of mitochondrial fusion, essential for the naive-to-primed interconversion of embryonic stem cells (ESCs). Acts as a regulator of lipid homeostasis and has a regulatory role in adipocyte differentiation and biology. This is Mitochondrial carrier homolog 2 from Mus musculus (Mouse).